Here is a 259-residue protein sequence, read N- to C-terminus: Type III pantothenate kinase (259 aa).

ATP is bound at residue 6–13 (DVGNTNCT). 107 to 110 (GSDR) is a binding site for substrate. Asp109 acts as the Proton acceptor in catalysis. Position 129 (Asp129) interacts with K(+). An ATP-binding site is contributed by Thr132. Thr184 provides a ligand contact to substrate.

This sequence belongs to the type III pantothenate kinase family. As to quaternary structure, homodimer. The cofactor is NH4(+). K(+) is required as a cofactor.

It is found in the cytoplasm. The catalysed reaction is (R)-pantothenate + ATP = (R)-4'-phosphopantothenate + ADP + H(+). It functions in the pathway cofactor biosynthesis; coenzyme A biosynthesis; CoA from (R)-pantothenate: step 1/5. Functionally, catalyzes the phosphorylation of pantothenate (Pan), the first step in CoA biosynthesis. The sequence is that of Type III pantothenate kinase from Listeria welshimeri serovar 6b (strain ATCC 35897 / DSM 20650 / CCUG 15529 / CIP 8149 / NCTC 11857 / SLCC 5334 / V8).